The following is a 335-amino-acid chain: Ketol-acid reductoisomerase (NADP(+)) 2 (335 aa).

Residues 1–180 (MKTYYEQDAN…GCTRAGVIET (180 aa)) form the KARI N-terminal Rossmann domain. Residues 24 to 27 (YGSQ), Arg-47, Ser-51, and 81 to 84 (DEQQ) each bind NADP(+). His-106 is a catalytic residue. NADP(+) is bound at residue Gly-132. Residues 181–326 (TFQEETETDL…EELREMMSWI (146 aa)) form the KARI C-terminal knotted domain. Residues Asp-189, Glu-193, Glu-225, and Glu-229 each coordinate Mg(2+). Residue Ser-250 participates in substrate binding.

The protein belongs to the ketol-acid reductoisomerase family. Mg(2+) is required as a cofactor.

The catalysed reaction is (2R)-2,3-dihydroxy-3-methylbutanoate + NADP(+) = (2S)-2-acetolactate + NADPH + H(+). It carries out the reaction (2R,3R)-2,3-dihydroxy-3-methylpentanoate + NADP(+) = (S)-2-ethyl-2-hydroxy-3-oxobutanoate + NADPH + H(+). It functions in the pathway amino-acid biosynthesis; L-isoleucine biosynthesis; L-isoleucine from 2-oxobutanoate: step 2/4. It participates in amino-acid biosynthesis; L-valine biosynthesis; L-valine from pyruvate: step 2/4. Its function is as follows. Involved in the biosynthesis of branched-chain amino acids (BCAA). Catalyzes an alkyl-migration followed by a ketol-acid reduction of (S)-2-acetolactate (S2AL) to yield (R)-2,3-dihydroxy-isovalerate. In the isomerase reaction, S2AL is rearranged via a Mg-dependent methyl migration to produce 3-hydroxy-3-methyl-2-ketobutyrate (HMKB). In the reductase reaction, this 2-ketoacid undergoes a metal-dependent reduction by NADPH to yield (R)-2,3-dihydroxy-isovalerate. This is Ketol-acid reductoisomerase (NADP(+)) 2 from Bacillus anthracis.